We begin with the raw amino-acid sequence, 455 residues long: DNA repair protein RadA (455 aa).

Residues 11–28 (CVGCGYVHPKWLGRCPEC) form a C4-type zinc finger. Position 97–104 (97–104 (GEPGIGKS)) interacts with ATP. A RadA KNRFG motif motif is present at residues 250 to 254 (KNRFG). The interval 350 to 455 (DIYVNVAGGI…IAEIFSKAKA (106 aa)) is lon-protease-like.

It belongs to the RecA family. RadA subfamily.

Functionally, DNA-dependent ATPase involved in processing of recombination intermediates, plays a role in repairing DNA breaks. Stimulates the branch migration of RecA-mediated strand transfer reactions, allowing the 3' invading strand to extend heteroduplex DNA faster. Binds ssDNA in the presence of ADP but not other nucleotides, has ATPase activity that is stimulated by ssDNA and various branched DNA structures, but inhibited by SSB. Does not have RecA's homology-searching function. The chain is DNA repair protein RadA from Treponema pallidum (strain Nichols).